The following is a 334-amino-acid chain: Ornithine carbamoyltransferase (334 aa).

Residues 57 to 60, Q84, R108, and 135 to 138 each bind carbamoyl phosphate; these read STRT and HPTQ. L-ornithine is bound by residues N169, D233, and 237–238; that span reads SM. Carbamoyl phosphate is bound by residues 275 to 276 and R320; that span reads CL.

This sequence belongs to the aspartate/ornithine carbamoyltransferase superfamily. OTCase family.

It localises to the cytoplasm. The catalysed reaction is carbamoyl phosphate + L-ornithine = L-citrulline + phosphate + H(+). It functions in the pathway amino-acid biosynthesis; L-arginine biosynthesis; L-arginine from L-ornithine and carbamoyl phosphate: step 1/3. Functionally, reversibly catalyzes the transfer of the carbamoyl group from carbamoyl phosphate (CP) to the N(epsilon) atom of ornithine (ORN) to produce L-citrulline. This Aeromonas salmonicida (strain A449) protein is Ornithine carbamoyltransferase.